Here is a 623-residue protein sequence, read N- to C-terminus: MGQGSSHDAPHLTPEQLSHTLAQRFASKSYTPLELYCFSTVFRSLADTSSGVRYWSEPTLCRFLELPDALGVGSVLFQMCSYLGAFPLPSQAPAILTQEALLKVVTILTERYGSVIKRRGRELWLRELYRGLAVYDRGVSASIEEEHEREAQPVATEGESSGMGFAIDAPEDGEGDEDEDDELVLAALDSMDAVEVFKQGEQANVHHSIIPTDNFLKLVELLLLIAPIDAQQSLSSLAPELSDERVEELRRVAHVIVSAFGVENHPGVTYRTFNTVISAALPYLFNGLNPLFEHFLFAKDFDLSKRKNDPSSPSQDTHPVIPPPKTVMDPEPLLPQPGEILNLTLLSQLSFFLKGNTLFRRLRPLYSGNNHGFSMGSFEKQVFNWRAPTILLVKGRVLPATPSNTRERALQDMLPPKRLPNSVPESQENQTLIYGAYIPTQWKHTGKTCFGDESTVLFQLSPTHDVFKASKFSTDYVYFNKSPTQPPGIGLGTPIPTQSSAHTHSSHSQTLFRPGPVSLHLDDALEFGIFTHVSDGGGSFHPSALPVRKRRDWQDRFEIESLEVWGCGGDEVAEAQRKEWAWQEREAEARRRINLGTGDQELDRELLKMAGIISGDRSGGSMG.

2 disordered regions span residues 144 to 179 and 307 to 328; these read EEEH…DEDE and KNDP…KTVM. Residues 169 to 179 show a composition bias toward acidic residues; it reads APEDGEGDEDE. The TLDc domain maps to 339–568; that stretch reads EILNLTLLSQ…IESLEVWGCG (230 aa).

This sequence belongs to the RTC5 family.

The protein resides in the cytoplasm. Functionally, may be involved in a process influencing telomere capping. The sequence is that of Restriction of telomere capping protein 5 (RTC5) from Leptosphaeria maculans (strain JN3 / isolate v23.1.3 / race Av1-4-5-6-7-8) (Blackleg fungus).